The chain runs to 502 residues: ATP synthase subunit alpha (502 aa).

The segment at 119-139 (GPIATTKSRPIESPAPGVMDR) is disordered. ATP is bound at residue 169–176 (GDRQTGKT).

Belongs to the ATPase alpha/beta chains family. F-type ATPases have 2 components, CF(1) - the catalytic core - and CF(0) - the membrane proton channel. CF(1) has five subunits: alpha(3), beta(3), gamma(1), delta(1), epsilon(1). CF(0) has three main subunits: a(1), b(2) and c(9-12). The alpha and beta chains form an alternating ring which encloses part of the gamma chain. CF(1) is attached to CF(0) by a central stalk formed by the gamma and epsilon chains, while a peripheral stalk is formed by the delta and b chains.

The protein resides in the cell membrane. It catalyses the reaction ATP + H2O + 4 H(+)(in) = ADP + phosphate + 5 H(+)(out). In terms of biological role, produces ATP from ADP in the presence of a proton gradient across the membrane. The alpha chain is a regulatory subunit. The sequence is that of ATP synthase subunit alpha from Alkalihalophilus pseudofirmus (strain ATCC BAA-2126 / JCM 17055 / OF4) (Bacillus pseudofirmus).